Consider the following 270-residue polypeptide: Cystinosin homolog (270 aa).

The 67-residue stretch at 9–75 (LEISYEIVGW…LYFSPVIQKQ (67 aa)) folds into the PQ-loop 1 domain. A helical transmembrane segment spans residues 14 to 34 (EIVGWIAFASWSISFYPQLIL). The N-linked (GlcNAc...) asparagine glycan is linked to N52. Helical transmembrane passes span 93-113 (VAFS…IFIY), 123-143 (LAIG…FIAL), and 148-168 (WLWL…VKYI). Residues 151–213 (LISIFNSIQV…IQSIDQNSWK (63 aa)) form the PQ-loop 2 domain. N-linked (GlcNAc...) asparagine glycosylation occurs at N174. A run of 2 helical transmembrane segments spans residues 180–200 (TVGW…ANYL) and 223–243 (LLSL…YVLY). The segment at 250–270 (KSPETGEESNEPLIDSSHEHV) is disordered.

This sequence belongs to the cystinosin (TC 2.A.43.1) family.

Its subcellular location is the lysosome membrane. In terms of biological role, thought to transport cystine out of lysosomes. In Arabidopsis thaliana (Mouse-ear cress), this protein is Cystinosin homolog.